We begin with the raw amino-acid sequence, 204 residues long: Somatotropin (204 aa).

An N-terminal signal peptide occupies residues 1-17; it reads MDRAILLLSVVCLVVSS. Gln-18 carries the pyrrolidone carboxylic acid modification. His-36 contacts Zn(2+). Cys-69 and Cys-177 form a disulfide bridge. Glu-186 provides a ligand contact to Zn(2+). Cys-194 and Cys-202 form a disulfide bridge.

This sequence belongs to the somatotropin/prolactin family.

Its subcellular location is the secreted. Growth hormone plays an important role in growth control and is involved in the regulation of several anabolic processes. Implicated as an osmoregulatory substance important for seawater adaptation. This chain is Somatotropin (gh), found in Odontesthes argentinensis (Marine silverside).